Reading from the N-terminus, the 280-residue chain is Succinate dehydrogenase [ubiquinone] iron-sulfur subunit, mitochondrial (280 aa).

The N-terminal 25 residues, 1 to 25 (MAAVCFSLSRCCSAVHRPAVTAVRF), are a transit peptide targeting the mitochondrion. The 2Fe-2S ferredoxin-type domain occupies 39-129 (KKFQIYRWDP…TSKVTKIYPL (91 aa)). 4 residues coordinate [2Fe-2S] cluster: Cys92, Cys97, Cys100, and Cys112. Positions 175 to 205 (DRQKLDGLYECILCACCSTSCPSYWWNADKY) constitute a 4Fe-4S ferredoxin-type domain. Residues Cys185, Cys188, and Cys191 each coordinate [4Fe-4S] cluster. Cys195 provides a ligand contact to [3Fe-4S] cluster. Residue Trp200 coordinates a ubiquinone. Cys242 and Cys248 together coordinate [3Fe-4S] cluster. A [4Fe-4S] cluster-binding site is contributed by Cys252.

It belongs to the succinate dehydrogenase/fumarate reductase iron-sulfur protein family. In terms of assembly, component of complex II composed of four subunits: the flavoprotein (FP) sdha, iron-sulfur protein (IP) sdhb, and a cytochrome b composed of sdhc and sdhd. [2Fe-2S] cluster is required as a cofactor. It depends on [3Fe-4S] cluster as a cofactor. Requires [4Fe-4S] cluster as cofactor.

It is found in the mitochondrion inner membrane. It carries out the reaction a quinone + succinate = fumarate + a quinol. The enzyme catalyses (R)-malate + a quinone = enol-oxaloacetate + a quinol. It catalyses the reaction (S)-malate + a quinone = enol-oxaloacetate + a quinol. Its pathway is carbohydrate metabolism; tricarboxylic acid cycle; fumarate from succinate (eukaryal route): step 1/1. With respect to regulation, enol-oxaloacetate inhibits the succinate dehydrogenase activity. Iron-sulfur protein (IP) subunit of the succinate dehydrogenase complex (mitochondrial respiratory chain complex II), responsible for transferring electrons from succinate to ubiquinone (coenzyme Q). SDH also oxidizes malate to the non-canonical enol form of oxaloacetate, enol-oxaloacetate. Enol-oxaloacetate, which is a potent inhibitor of the succinate dehydrogenase activity, is further isomerized into keto-oxaloacetate. This is Succinate dehydrogenase [ubiquinone] iron-sulfur subunit, mitochondrial (sdhb) from Danio rerio (Zebrafish).